A 404-amino-acid chain; its full sequence is Cysteine desulfurase IscS (404 aa).

Residues 75-76, N155, Q183, and 203-205 contribute to the pyridoxal 5'-phosphate site; these read AT and SGH. K206 is modified (N6-(pyridoxal phosphate)lysine). Residue T243 coordinates pyridoxal 5'-phosphate. Residue C328 is the Cysteine persulfide intermediate of the active site. A [2Fe-2S] cluster-binding site is contributed by C328.

Belongs to the class-V pyridoxal-phosphate-dependent aminotransferase family. NifS/IscS subfamily. Homodimer. Forms a heterotetramer with IscU, interacts with other sulfur acceptors. The cofactor is pyridoxal 5'-phosphate.

Its subcellular location is the cytoplasm. It catalyses the reaction (sulfur carrier)-H + L-cysteine = (sulfur carrier)-SH + L-alanine. It participates in cofactor biosynthesis; iron-sulfur cluster biosynthesis. In terms of biological role, master enzyme that delivers sulfur to a number of partners involved in Fe-S cluster assembly, tRNA modification or cofactor biosynthesis. Catalyzes the removal of elemental sulfur atoms from cysteine to produce alanine. Functions as a sulfur delivery protein for Fe-S cluster synthesis onto IscU, an Fe-S scaffold assembly protein, as well as other S acceptor proteins. This is Cysteine desulfurase IscS from Shewanella frigidimarina (strain NCIMB 400).